Reading from the N-terminus, the 319-residue chain is MATH domain and coiled-coil domain-containing protein At3g58200 (319 aa).

Residues 6-132 (DNKFRWVIKN…NEEVKIVVEV (127 aa)) enclose the MATH domain. Positions 255-302 (FKVDWLEKKLEEVKEKKKEEQIGETRMQEMKVFKQKCSDIEALMEREK) form a coiled coil.

The sequence is that of MATH domain and coiled-coil domain-containing protein At3g58200 from Arabidopsis thaliana (Mouse-ear cress).